The sequence spans 881 residues: DNA mismatch repair protein MutS (881 aa).

632-639 (GPNMGGKS) lines the ATP pocket.

This sequence belongs to the DNA mismatch repair MutS family.

Functionally, this protein is involved in the repair of mismatches in DNA. It is possible that it carries out the mismatch recognition step. This protein has a weak ATPase activity. The chain is DNA mismatch repair protein MutS from Acinetobacter baylyi (strain ATCC 33305 / BD413 / ADP1).